We begin with the raw amino-acid sequence, 430 residues long: Protein translocase subunit SecY (430 aa).

10 helical membrane passes run 18 to 38 (IFFT…PAPG), 68 to 88 (FSIF…MQLL), 117 to 137 (FAII…NNYL), 147 to 167 (VMSY…LIWL), 174 to 194 (FGVG…TLPS), 217 to 237 (ILGL…VLEA), 270 to 290 (VIPV…TLFF), 308 to 328 (NIGM…YAFV), 368 to 388 (FVGS…TKFM), and 389 to 409 (GLPQ…GVAI).

This sequence belongs to the SecY/SEC61-alpha family. As to quaternary structure, component of the Sec protein translocase complex. Heterotrimer consisting of SecY, SecE and SecG subunits. The heterotrimers can form oligomers, although 1 heterotrimer is thought to be able to translocate proteins. Interacts with the ribosome. Interacts with SecDF, and other proteins may be involved. Interacts with SecA.

The protein resides in the cell membrane. Functionally, the central subunit of the protein translocation channel SecYEG. Consists of two halves formed by TMs 1-5 and 6-10. These two domains form a lateral gate at the front which open onto the bilayer between TMs 2 and 7, and are clamped together by SecE at the back. The channel is closed by both a pore ring composed of hydrophobic SecY resides and a short helix (helix 2A) on the extracellular side of the membrane which forms a plug. The plug probably moves laterally to allow the channel to open. The ring and the pore may move independently. The chain is Protein translocase subunit SecY from Staphylococcus epidermidis (strain ATCC 35984 / DSM 28319 / BCRC 17069 / CCUG 31568 / BM 3577 / RP62A).